The sequence spans 344 residues: Heat-inducible transcription repressor HrcA (344 aa).

It belongs to the HrcA family.

Its function is as follows. Negative regulator of class I heat shock genes (grpE-dnaK-dnaJ and groELS operons). Prevents heat-shock induction of these operons. In Anoxybacillus flavithermus (strain DSM 21510 / WK1), this protein is Heat-inducible transcription repressor HrcA.